The chain runs to 432 residues: Enolase (432 aa).

Q166 is a binding site for (2R)-2-phosphoglycerate. E208 acts as the Proton donor in catalysis. Mg(2+) contacts are provided by D245, E291, and D318. The (2R)-2-phosphoglycerate site is built by K343, R372, S373, and K394. K343 functions as the Proton acceptor in the catalytic mechanism.

Belongs to the enolase family. Requires Mg(2+) as cofactor.

Its subcellular location is the cytoplasm. The protein resides in the secreted. The protein localises to the cell surface. The catalysed reaction is (2R)-2-phosphoglycerate = phosphoenolpyruvate + H2O. It functions in the pathway carbohydrate degradation; glycolysis; pyruvate from D-glyceraldehyde 3-phosphate: step 4/5. Catalyzes the reversible conversion of 2-phosphoglycerate (2-PG) into phosphoenolpyruvate (PEP). It is essential for the degradation of carbohydrates via glycolysis. In Leptospira borgpetersenii serovar Hardjo-bovis (strain L550), this protein is Enolase.